Consider the following 188-residue polypeptide: Large ribosomal subunit protein uL10 (188 aa).

It belongs to the universal ribosomal protein uL10 family. In terms of assembly, part of the ribosomal stalk of the 50S ribosomal subunit. The N-terminus interacts with L11 and the large rRNA to form the base of the stalk. The C-terminus forms an elongated spine to which L12 dimers bind in a sequential fashion forming a multimeric L10(L12)X complex.

Forms part of the ribosomal stalk, playing a central role in the interaction of the ribosome with GTP-bound translation factors. The chain is Large ribosomal subunit protein uL10 from Crocosphaera subtropica (strain ATCC 51142 / BH68) (Cyanothece sp. (strain ATCC 51142)).